A 263-amino-acid chain; its full sequence is Kallikrein 1-related peptidase b27 (263 aa).

The N-terminal stretch at Met-1–Ala-17 is a signal peptide. Positions Ala-18–Arg-24 are cleaved as a propeptide — activation peptide. Positions Ile-25–Ala-260 constitute a Peptidase S1 domain. 5 cysteine pairs are disulfide-bonded: Cys-31–Cys-175, Cys-50–Cys-66, Cys-154–Cys-221, Cys-186–Cys-200, and Cys-211–Cys-236. Residue His-65 is the Charge relay system of the active site. N-linked (GlcNAc...) asparagine glycans are attached at residues Asn-69 and Asn-105. Asp-122 (charge relay system) is an active-site residue. The Charge relay system role is filled by Ser-215.

This sequence belongs to the peptidase S1 family. Kallikrein subfamily. As to expression, expressed in testis and submaxillary gland. Not expressed in heart, brain, spleen, lung, liver, muscle, kidney and ovary. In the testis, expression localized specifically to Leydig cells in the interstitial tissues.

Strongly inhibited by protease inhibitors diisopropyl fluorophosphate, phenylmethanesulfonyl fluoride and SBTI. Functionally, serine protease with chymotrypsin-like cleavage specificity. Shows activity towards casein, gelatin, IGFBP3 and fibronectin but not towards laminin or collagens I and IV. Does not hydrolyze kininogin to release Lys-bradykinin. In Mus musculus (Mouse), this protein is Kallikrein 1-related peptidase b27 (Klk1b27).